The following is a 260-amino-acid chain: Caveolae-associated protein 3 (260 aa).

Positions 1–84 (MGESALESGP…SNTLAQLLAK (84 aa)) are interaction with CAVIN1. Residues 20–78 (VHAVTVVTLLEKLATMLETLRERQGGLAQRQGGLAGSVRRIQSNLGALSRSHDTTSNTL) form a leucine-zipper region. 2 positions are modified to phosphoserine: Ser-62 and Ser-70. Lys-128 is covalently cross-linked (Glycyl lysine isopeptide (Lys-Gly) (interchain with G-Cter in SUMO2)). The tract at residues 135-201 (AKAFQKAPEP…SGRKGHAAPT (67 aa)) is interaction with CAV1. Residues 140–260 (KAPEPLGPVE…AAVLQVESAA (121 aa)) are disordered. Positions 157-168 (AEAEESSDEEEP) are enriched in acidic residues. Phosphoserine occurs at positions 162, 163, and 171. A compositionally biased stretch (pro residues) spans 201-210 (TPTPVKPPRL).

The protein belongs to the CAVIN family. In terms of assembly, component of the CAVIN complex composed of CAVIN1, CAVIN2, CAVIN3 and CAVIN4. Interacts with PRKCD and with phosphatidylserine. Phosphatidylserine may form a bridge between PKC and PKC-binding partners and stabilize the binding. Interacts with PER2. Interacts with CAVIN1 and EPS15L1. Interacts (via leucine-zipper domain) with CAV1 in a cholesterol-sensitive manner. In terms of processing, in vitro, phosphorylated by PRKCD.

It is found in the cytoplasm. It localises to the membrane. The protein localises to the caveola. The protein resides in the cytosol. Functionally, regulates the traffic and/or budding of caveolae. Plays a role in caveola formation in a tissue-specific manner. Required for the formation of caveolae in smooth muscle but not in the lung and heart endothelial cells. Regulates the equilibrium between cell surface-associated and cell surface-dissociated caveolae by promoting the rapid release of caveolae from the cell surface. Plays a role in the regulation of the circadian clock. Modulates the period length and phase of circadian gene expression and also regulates expression and interaction of the core clock components PER1/2 and CRY1/2. The chain is Caveolae-associated protein 3 (CAVIN3) from Bos taurus (Bovine).